The chain runs to 374 residues: Histidinol-phosphate aminotransferase (374 aa).

The residue at position 215 (lysine 215) is an N6-(pyridoxal phosphate)lysine.

Belongs to the class-II pyridoxal-phosphate-dependent aminotransferase family. Histidinol-phosphate aminotransferase subfamily. In terms of assembly, homodimer. The cofactor is pyridoxal 5'-phosphate.

It carries out the reaction L-histidinol phosphate + 2-oxoglutarate = 3-(imidazol-4-yl)-2-oxopropyl phosphate + L-glutamate. The protein operates within amino-acid biosynthesis; L-histidine biosynthesis; L-histidine from 5-phospho-alpha-D-ribose 1-diphosphate: step 7/9. This is Histidinol-phosphate aminotransferase from Yersinia enterocolitica serotype O:8 / biotype 1B (strain NCTC 13174 / 8081).